Consider the following 361-residue polypeptide: Riboflavin biosynthesis protein RibD (361 aa).

In terms of domain architecture, CMP/dCMP-type deaminase spans 1 to 122; sequence MEEYYMKLAL…MMKEAGIEVR (122 aa). Residues 1–144 are deaminase; the sequence is MEEYYMKLAL…EKFLHFMRTG (144 aa). Histidine 49 provides a ligand contact to Zn(2+). Glutamate 51 functions as the Proton donor in the catalytic mechanism. Zn(2+) is bound by residues cysteine 74 and cysteine 83. The interval 145 to 361 is reductase; it reads LPYVTLKAAA…IKLTAKPTKE (217 aa). Alanine 153 is a binding site for NADP(+). Serine 167 contacts substrate. Position 169 (tryptophan 169) interacts with NADP(+). A substrate-binding site is contributed by arginine 183. NADP(+) is bound by residues threonine 195 and aspartate 199. Positions 203 and 206 each coordinate substrate. Threonine 221 is a binding site for NADP(+). Glutamate 290 contacts substrate. NADP(+) is bound at residue 292 to 298; that stretch reads GSAVHGS.

This sequence in the N-terminal section; belongs to the cytidine and deoxycytidylate deaminase family. In the C-terminal section; belongs to the HTP reductase family. In terms of assembly, homotetramer. Requires Zn(2+) as cofactor.

The enzyme catalyses 2,5-diamino-6-hydroxy-4-(5-phosphoribosylamino)-pyrimidine + H2O + H(+) = 5-amino-6-(5-phospho-D-ribosylamino)uracil + NH4(+). The catalysed reaction is 5-amino-6-(5-phospho-D-ribitylamino)uracil + NADP(+) = 5-amino-6-(5-phospho-D-ribosylamino)uracil + NADPH + H(+). Its pathway is cofactor biosynthesis; riboflavin biosynthesis; 5-amino-6-(D-ribitylamino)uracil from GTP: step 2/4. The protein operates within cofactor biosynthesis; riboflavin biosynthesis; 5-amino-6-(D-ribitylamino)uracil from GTP: step 3/4. In terms of biological role, converts 2,5-diamino-6-(ribosylamino)-4(3h)-pyrimidinone 5'-phosphate into 5-amino-6-(ribosylamino)-2,4(1h,3h)-pyrimidinedione 5'-phosphate. The protein is Riboflavin biosynthesis protein RibD (ribD) of Bacillus subtilis (strain 168).